The primary structure comprises 351 residues: Uroporphyrinogen decarboxylase (351 aa).

Residues 26–30 (RQAGR), Asp-75, Tyr-151, Ser-206, and His-321 contribute to the substrate site.

This sequence belongs to the uroporphyrinogen decarboxylase family. In terms of assembly, homodimer.

Its subcellular location is the cytoplasm. It catalyses the reaction uroporphyrinogen III + 4 H(+) = coproporphyrinogen III + 4 CO2. The protein operates within porphyrin-containing compound metabolism; protoporphyrin-IX biosynthesis; coproporphyrinogen-III from 5-aminolevulinate: step 4/4. Catalyzes the decarboxylation of four acetate groups of uroporphyrinogen-III to yield coproporphyrinogen-III. This chain is Uroporphyrinogen decarboxylase, found in Koribacter versatilis (strain Ellin345).